Consider the following 541-residue polypeptide: Threonine--tRNA ligase catalytic subunit (541 aa).

Residues 135-429 form a catalytic region; the sequence is DHRIIGERMD…LLEHFRGKLP (295 aa). Zn(2+) contacts are provided by Cys-227, His-278, and His-406.

This sequence belongs to the class-II aminoacyl-tRNA synthetase family. In terms of assembly, homodimer. Probably interacts with its editing subunit. It depends on Zn(2+) as a cofactor.

The protein localises to the cytoplasm. It carries out the reaction tRNA(Thr) + L-threonine + ATP = L-threonyl-tRNA(Thr) + AMP + diphosphate + H(+). Catalyzes the attachment of threonine to tRNA(Thr) in a two-step reaction: L-threonine is first activated by ATP to form Thr-AMP and then transferred to the acceptor end of tRNA(Thr). Also activates L-serine and transfers it to tRNA(Thr) but cannot deacylate incorrectly charged amino acid; unlike most archaea the editing function is found in a freestanding protein. The polypeptide is Threonine--tRNA ligase catalytic subunit (Metallosphaera sedula (strain ATCC 51363 / DSM 5348 / JCM 9185 / NBRC 15509 / TH2)).